A 423-amino-acid polypeptide reads, in one-letter code: Glutamyl-tRNA reductase (423 aa).

Substrate is bound by residues 49 to 52 (TCNR), S111, 116 to 118 (EPQ), and Q122. C50 (nucleophile) is an active-site residue. 191-196 (GAGEMS) serves as a coordination point for NADP(+).

It belongs to the glutamyl-tRNA reductase family. In terms of assembly, homodimer.

It catalyses the reaction (S)-4-amino-5-oxopentanoate + tRNA(Glu) + NADP(+) = L-glutamyl-tRNA(Glu) + NADPH + H(+). Its pathway is porphyrin-containing compound metabolism; protoporphyrin-IX biosynthesis; 5-aminolevulinate from L-glutamyl-tRNA(Glu): step 1/2. Functionally, catalyzes the NADPH-dependent reduction of glutamyl-tRNA(Glu) to glutamate 1-semialdehyde (GSA). In Syntrophus aciditrophicus (strain SB), this protein is Glutamyl-tRNA reductase.